A 264-amino-acid chain; its full sequence is Phosphonoacetaldehyde hydrolase (264 aa).

D9 functions as the Nucleophile in the catalytic mechanism. D9 and A11 together coordinate Mg(2+). K50 functions as the Schiff-base intermediate with substrate in the catalytic mechanism. Residue D183 coordinates Mg(2+).

Belongs to the HAD-like hydrolase superfamily. PhnX family. In terms of assembly, homodimer. Mg(2+) serves as cofactor.

It catalyses the reaction phosphonoacetaldehyde + H2O = acetaldehyde + phosphate + H(+). Its function is as follows. Involved in phosphonate degradation. The chain is Phosphonoacetaldehyde hydrolase from Bacillus thuringiensis (strain Al Hakam).